The following is a 121-amino-acid chain: Large ribosomal subunit protein uL18 (121 aa).

This sequence belongs to the universal ribosomal protein uL18 family. Part of the 50S ribosomal subunit; part of the 5S rRNA/L5/L18/L25 subcomplex. Contacts the 5S and 23S rRNAs.

This is one of the proteins that bind and probably mediate the attachment of the 5S RNA into the large ribosomal subunit, where it forms part of the central protuberance. The polypeptide is Large ribosomal subunit protein uL18 (Ureaplasma parvum serovar 3 (strain ATCC 27815 / 27 / NCTC 11736)).